A 507-amino-acid chain; its full sequence is ATP synthase subunit alpha, chloroplastic (507 aa).

170-177 (GDRQTGKT) lines the ATP pocket.

Belongs to the ATPase alpha/beta chains family. F-type ATPases have 2 components, CF(1) - the catalytic core - and CF(0) - the membrane proton channel. CF(1) has five subunits: alpha(3), beta(3), gamma(1), delta(1), epsilon(1). CF(0) has four main subunits: a, b, b' and c.

It is found in the plastid. The protein localises to the chloroplast thylakoid membrane. The catalysed reaction is ATP + H2O + 4 H(+)(in) = ADP + phosphate + 5 H(+)(out). In terms of biological role, produces ATP from ADP in the presence of a proton gradient across the membrane. The alpha chain is a regulatory subunit. In Panax ginseng (Korean ginseng), this protein is ATP synthase subunit alpha, chloroplastic.